A 1638-amino-acid polypeptide reads, in one-letter code: Ciliary rootlet coiled-coil protein 2 (1638 aa).

Residues 1 to 20 (MSSTSSNPDDGDTTEQSQLG) are compositionally biased toward polar residues. Disordered regions lie at residues 1 to 21 (MSST…QLGL), 39 to 92 (REDR…REES), 396 to 423 (ARLR…TSLH), and 1168 to 1213 (TRRK…NLQE). Low complexity predominate over residues 67–82 (SSSLGEEPLSGLREPP). A coiled-coil region spans residues 85–144 (TSHAREESELLQEELTRLEDLLAQADAEREELASRCHMVSQRLQARLDTTEARLRKSELE). The span at 406–421 (SPHQRMSPARTSSPTS) shows a compositional bias: polar residues. Coiled-coil stretches lie at residues 426–1234 (LQAV…VQKE) and 1281–1315 (LQEA…AEGA). Residues 1180–1193 (RTLEAENQRKRQEV) are compositionally biased toward basic and acidic residues. Disordered stretches follow at residues 1338 to 1383 (RNLL…VPVD) and 1506 to 1551 (ALEE…QTTS). Positions 1349 to 1371 (SPTTGSSQTRPGRQRTSPPTRSY) are enriched in polar residues. 2 coiled-coil regions span residues 1412–1506 (RDNS…LRQA) and 1542–1576 (RRAL…TEQE).

This sequence belongs to the rootletin family.

This is Ciliary rootlet coiled-coil protein 2 from Mus musculus (Mouse).